We begin with the raw amino-acid sequence, 201 residues long: Large ribosomal subunit protein uL4 (201 aa).

The tract at residues 45-66 (AQLTRSEVSGGGKKPWRQKGTG) is disordered.

It belongs to the universal ribosomal protein uL4 family. In terms of assembly, part of the 50S ribosomal subunit.

In terms of biological role, one of the primary rRNA binding proteins, this protein initially binds near the 5'-end of the 23S rRNA. It is important during the early stages of 50S assembly. It makes multiple contacts with different domains of the 23S rRNA in the assembled 50S subunit and ribosome. Its function is as follows. Forms part of the polypeptide exit tunnel. This chain is Large ribosomal subunit protein uL4, found in Aeromonas hydrophila subsp. hydrophila (strain ATCC 7966 / DSM 30187 / BCRC 13018 / CCUG 14551 / JCM 1027 / KCTC 2358 / NCIMB 9240 / NCTC 8049).